Here is a 502-residue protein sequence, read N- to C-terminus: ATP synthase subunit alpha (502 aa).

169–176 (GDRQTGKT) serves as a coordination point for ATP.

The protein belongs to the ATPase alpha/beta chains family. F-type ATPases have 2 components, CF(1) - the catalytic core - and CF(0) - the membrane proton channel. CF(1) has five subunits: alpha(3), beta(3), gamma(1), delta(1), epsilon(1). CF(0) has three main subunits: a(1), b(2) and c(9-12). The alpha and beta chains form an alternating ring which encloses part of the gamma chain. CF(1) is attached to CF(0) by a central stalk formed by the gamma and epsilon chains, while a peripheral stalk is formed by the delta and b chains.

Its subcellular location is the cell membrane. The catalysed reaction is ATP + H2O + 4 H(+)(in) = ADP + phosphate + 5 H(+)(out). Functionally, produces ATP from ADP in the presence of a proton gradient across the membrane. The alpha chain is a regulatory subunit. This Staphylococcus aureus (strain bovine RF122 / ET3-1) protein is ATP synthase subunit alpha.